A 460-amino-acid chain; its full sequence is Argininosuccinate lyase (460 aa).

The protein belongs to the lyase 1 family. Argininosuccinate lyase subfamily.

The protein localises to the cytoplasm. The enzyme catalyses 2-(N(omega)-L-arginino)succinate = fumarate + L-arginine. Its pathway is amino-acid biosynthesis; L-arginine biosynthesis; L-arginine from L-ornithine and carbamoyl phosphate: step 3/3. The polypeptide is Argininosuccinate lyase (Oleidesulfovibrio alaskensis (strain ATCC BAA-1058 / DSM 17464 / G20) (Desulfovibrio alaskensis)).